The primary structure comprises 63 residues: Large ribosomal subunit protein bL28 (63 aa).

Belongs to the bacterial ribosomal protein bL28 family.

This is Large ribosomal subunit protein bL28 from Heliobacterium modesticaldum (strain ATCC 51547 / Ice1).